Consider the following 245-residue polypeptide: 8-amino-3,8-dideoxy-manno-octulosonate cytidylyltransferase (245 aa).

It belongs to the KdsB family.

The protein resides in the cytoplasm. The enzyme catalyses 8-amino-3,8-dideoxy-alpha-D-manno-octulosonate + CTP = CMP-8-amino-3,8-dideoxy-alpha-D-manno-oct-2-ulosonate + diphosphate. It participates in bacterial outer membrane biogenesis; lipopolysaccharide biosynthesis. Activates KDO8N (a required 8-carbon sugar) for incorporation into bacterial lipopolysaccharide in the Shewanella genus. The protein is 8-amino-3,8-dideoxy-manno-octulosonate cytidylyltransferase of Shewanella baltica (strain OS195).